The sequence spans 319 residues: MSAILFPEYTHRHLLGIEGLVPVEVTALLDRAEIYANRNRSANKVSDEMRGRTVINLFFENSTRTRTSFELAARRLGADVINMQVGSSSVAKGETLIDTAVTLNAMHPDVLVVRHAESGAAALLAQKVNCAVINAGDGAHEHPTQALLDALTIRRRKGRLGGLDVAICGDVLHSRVARSNIHLLTLMGARVRVVGPRPLIPSGIGELGVDIFHDMREGLRGVDIVMMLRIQMERMQGNFIPSVREYFRYFGLDREKLALAKPDALIMHPGPMNRGVEIDSDVADDFERSVIREQVEMGVAVRMAVLEVLSGNLASMETA.

2 residues coordinate carbamoyl phosphate: arginine 64 and threonine 65. Residue lysine 92 participates in L-aspartate binding. Residues arginine 114, histidine 142, and glutamine 145 each contribute to the carbamoyl phosphate site. L-aspartate-binding residues include arginine 175 and arginine 229. Residues glycine 270 and proline 271 each contribute to the carbamoyl phosphate site.

It belongs to the aspartate/ornithine carbamoyltransferase superfamily. ATCase family. Heterododecamer (2C3:3R2) of six catalytic PyrB chains organized as two trimers (C3), and six regulatory PyrI chains organized as three dimers (R2).

The catalysed reaction is carbamoyl phosphate + L-aspartate = N-carbamoyl-L-aspartate + phosphate + H(+). It participates in pyrimidine metabolism; UMP biosynthesis via de novo pathway; (S)-dihydroorotate from bicarbonate: step 2/3. Its function is as follows. Catalyzes the condensation of carbamoyl phosphate and aspartate to form carbamoyl aspartate and inorganic phosphate, the committed step in the de novo pyrimidine nucleotide biosynthesis pathway. The protein is Aspartate carbamoyltransferase catalytic subunit of Rhodospirillum rubrum (strain ATCC 11170 / ATH 1.1.1 / DSM 467 / LMG 4362 / NCIMB 8255 / S1).